The following is a 206-amino-acid chain: Large ribosomal subunit protein uL13 (206 aa).

This sequence belongs to the universal ribosomal protein uL13 family.

In Picea mariana (Black spruce), this protein is Large ribosomal subunit protein uL13 (RPL13A).